We begin with the raw amino-acid sequence, 305 residues long: GPI-anchored hemophore cfmA (305 aa).

The signal sequence occupies residues 1–18; sequence MKASVSLLLLSAASMASA. Residues 19 to 111 form the CFEM domain; sequence AMSVSQCAQM…GSGSGSDSGS (93 aa). Cystine bridges form between cysteine 25-cysteine 68, cysteine 29-cysteine 63, cysteine 42-cysteine 49, and cysteine 51-cysteine 84. Residue aspartate 46 coordinates heme. A disordered region spans residues 92–287; the sequence is TATGAGGSSS…STGNVAPRGA (196 aa). Positions 95–149 are enriched in gly residues; the sequence is GAGGSSSGSGSGSDSGSGSGSGSGSGSGSGSGSGSSSGSGSGSGSGSGSGSGSNS. 3 stretches are compositionally biased toward low complexity: residues 150 to 186, 196 to 259, and 267 to 287; these read GSGS…NSTT, GASS…TATG, and GSAS…PRGA. Residues asparagine 183, asparagine 203, asparagine 237, asparagine 243, and asparagine 275 are each glycosylated (N-linked (GlcNAc...) asparagine). Serine 276 carries GPI-like-anchor amidated serine lipidation. Residues 277–305 constitute a propeptide, removed in mature form; sequence SSTGNVAPRGAVVGSGAVGALALAALIIL.

It belongs to the RBT5 family. Post-translationally, the GPI-like anchor contains a phosphoceramide lipid group. In terms of processing, the GPI-anchor is attached to the protein in the endoplasmic reticulum and serves to target the protein to the cell surface. There, the glucosamine-inositol phospholipid moiety is cleaved off and the GPI-modified mannoprotein is covalently attached via its lipidless GPI glycan remnant to the 1,6-beta-glucan of the outer cell wall layer.

It is found in the secreted. It localises to the cell wall. The protein resides in the cell membrane. GPI-anchored cell wall protein involved in stabilizing the cell wall. Not implicated in virulence, heme uptake and biofilm formation. The sequence is that of GPI-anchored hemophore cfmA from Aspergillus fumigatus (strain ATCC MYA-4609 / CBS 101355 / FGSC A1100 / Af293) (Neosartorya fumigata).